The primary structure comprises 374 residues: UPF0754 membrane protein SAS1767 (374 aa).

2 consecutive transmembrane segments (helical) span residues 4 to 24 (LFII…TNVI) and 354 to 374 (SLGF…AIFV).

The protein belongs to the UPF0754 family.

The protein localises to the cell membrane. This chain is UPF0754 membrane protein SAS1767, found in Staphylococcus aureus (strain MSSA476).